The chain runs to 328 residues: Ferredoxin--NADP reductase 2 (328 aa).

Residues T16, E35, Q43, Y48, I88, F123, D284, and T325 each coordinate FAD.

The protein belongs to the ferredoxin--NADP reductase type 2 family. Homodimer. Requires FAD as cofactor.

It carries out the reaction 2 reduced [2Fe-2S]-[ferredoxin] + NADP(+) + H(+) = 2 oxidized [2Fe-2S]-[ferredoxin] + NADPH. The chain is Ferredoxin--NADP reductase 2 from Oceanobacillus iheyensis (strain DSM 14371 / CIP 107618 / JCM 11309 / KCTC 3954 / HTE831).